The chain runs to 368 residues: 3-dehydroquinate synthase (368 aa).

NAD(+) contacts are provided by residues 110–114 (GVIGD), 134–135 (TS), K147, and K156. Residues E189, H254, and H271 each contribute to the Zn(2+) site.

The protein belongs to the sugar phosphate cyclases superfamily. Dehydroquinate synthase family. NAD(+) serves as cofactor. Co(2+) is required as a cofactor. It depends on Zn(2+) as a cofactor.

The protein resides in the cytoplasm. It catalyses the reaction 7-phospho-2-dehydro-3-deoxy-D-arabino-heptonate = 3-dehydroquinate + phosphate. It functions in the pathway metabolic intermediate biosynthesis; chorismate biosynthesis; chorismate from D-erythrose 4-phosphate and phosphoenolpyruvate: step 2/7. In terms of biological role, catalyzes the conversion of 3-deoxy-D-arabino-heptulosonate 7-phosphate (DAHP) to dehydroquinate (DHQ). The polypeptide is 3-dehydroquinate synthase (Thermosynechococcus vestitus (strain NIES-2133 / IAM M-273 / BP-1)).